The following is a 478-amino-acid chain: Dynein regulatory complex subunit 4 (478 aa).

Residues 1–12 (MAPKKKGKKGKA) are compositionally biased toward basic residues. The segment at 1–29 (MAPKKKGKKGKAKGTAIVDGVAPEDMTKE) is disordered. The regulates microtubule-binding stretch occupies residues 1 to 114 (MAPKKKGKKG…LLYEHQNNLA (114 aa)). Coiled coils occupy residues 24–207 (EDMT…RKTE) and 242–426 (LNNL…ELAR). The microtubule-binding stretch occupies residues 115–258 (EVKAEGTVVM…NSLKEQMEDM (144 aa)). Residues 357-478 (QQKTGFKNLL…GPAGLVGAPT (122 aa)) form an interaction with SMO region.

It belongs to the DRC4 family. In terms of assembly, component of the nexin-dynein regulatory complex (N-DRC). Interacts with microtubules. Interacts with SMO. Interacts (via coiled-coil domains) with RAB3B (in GTP-bound form). Interacts with DRC1. Interacts with DRC7. As to expression, highly expressed in adult testes and lung. Weakly or not expressed in other tested tissues.

The protein resides in the cytoplasm. It localises to the cytoskeleton. It is found in the cell projection. The protein localises to the cilium. Its subcellular location is the flagellum. The protein resides in the cilium axoneme. It localises to the cilium basal body. It is found in the golgi apparatus. The protein localises to the flagellum axoneme. Component of the nexin-dynein regulatory complex (N-DRC), a key regulator of ciliary/flagellar motility which maintains the alignment and integrity of the distal axoneme and regulates microtubule sliding in motile axonemes. Plays an important role in the assembly of the N-DRC linker. Plays dual roles at both the primary (or non-motile) cilia to regulate hedgehog signaling and in motile cilia to coordinate cilia movement. Required for proper motile cilia functioning. Positively regulates ciliary smoothened (SMO)-dependent Hedgehog (Hh) signaling pathway by facilitating the trafficking of SMO into the cilium and the stimulation of SMO activity in a GRK2-dependent manner. May play a role in the spermatozoa motility. The polypeptide is Dynein regulatory complex subunit 4 (Gas8) (Mus musculus (Mouse)).